The chain runs to 136 residues: Large ribosomal subunit protein uL16c (136 aa).

Belongs to the universal ribosomal protein uL16 family. In terms of assembly, part of the 50S ribosomal subunit.

The protein resides in the plastid. Its subcellular location is the chloroplast. This chain is Large ribosomal subunit protein uL16c, found in Chloranthus spicatus (Chulantree).